A 107-amino-acid chain; its full sequence is Large ribosomal subunit protein eL21 (107 aa).

This sequence belongs to the eukaryotic ribosomal protein eL21 family.

This chain is Large ribosomal subunit protein eL21 (rpl21e), found in Aeropyrum pernix (strain ATCC 700893 / DSM 11879 / JCM 9820 / NBRC 100138 / K1).